A 428-amino-acid chain; its full sequence is Gamma-glutamyl phosphate reductase (428 aa).

The protein belongs to the gamma-glutamyl phosphate reductase family.

The protein localises to the cytoplasm. The catalysed reaction is L-glutamate 5-semialdehyde + phosphate + NADP(+) = L-glutamyl 5-phosphate + NADPH + H(+). Its pathway is amino-acid biosynthesis; L-proline biosynthesis; L-glutamate 5-semialdehyde from L-glutamate: step 2/2. In terms of biological role, catalyzes the NADPH-dependent reduction of L-glutamate 5-phosphate into L-glutamate 5-semialdehyde and phosphate. The product spontaneously undergoes cyclization to form 1-pyrroline-5-carboxylate. This Clostridium tetani (strain Massachusetts / E88) protein is Gamma-glutamyl phosphate reductase.